The primary structure comprises 93 residues: Small ribosomal subunit protein uS19 (93 aa).

Belongs to the universal ribosomal protein uS19 family.

Functionally, protein S19 forms a complex with S13 that binds strongly to the 16S ribosomal RNA. The sequence is that of Small ribosomal subunit protein uS19 from Dehalococcoides mccartyi (strain ATCC BAA-2266 / KCTC 15142 / 195) (Dehalococcoides ethenogenes (strain 195)).